The chain runs to 248 residues: 1-(5-phosphoribosyl)-5-[(5-phosphoribosylamino)methylideneamino] imidazole-4-carboxamide isomerase (248 aa).

Catalysis depends on D8, which acts as the Proton acceptor. D131 (proton donor) is an active-site residue.

This sequence belongs to the HisA/HisF family.

It localises to the cytoplasm. The enzyme catalyses 1-(5-phospho-beta-D-ribosyl)-5-[(5-phospho-beta-D-ribosylamino)methylideneamino]imidazole-4-carboxamide = 5-[(5-phospho-1-deoxy-D-ribulos-1-ylimino)methylamino]-1-(5-phospho-beta-D-ribosyl)imidazole-4-carboxamide. Its pathway is amino-acid biosynthesis; L-histidine biosynthesis; L-histidine from 5-phospho-alpha-D-ribose 1-diphosphate: step 4/9. The chain is 1-(5-phosphoribosyl)-5-[(5-phosphoribosylamino)methylideneamino] imidazole-4-carboxamide isomerase from Cupriavidus taiwanensis (strain DSM 17343 / BCRC 17206 / CCUG 44338 / CIP 107171 / LMG 19424 / R1) (Ralstonia taiwanensis (strain LMG 19424)).